A 119-amino-acid polypeptide reads, in one-letter code: Protein TusC (119 aa).

This sequence belongs to the DsrF/TusC family. Heterohexamer, formed by a dimer of trimers. The hexameric TusBCD complex contains 2 copies each of TusB, TusC and TusD. The TusBCD complex interacts with TusE.

The protein localises to the cytoplasm. Part of a sulfur-relay system required for 2-thiolation of 5-methylaminomethyl-2-thiouridine (mnm(5)s(2)U) at tRNA wobble positions. This Escherichia coli O157:H7 protein is Protein TusC.